Reading from the N-terminus, the 177-residue chain is VQ motif-containing protein 11 (177 aa).

Positions 25 to 34 match the VQ motif; that stretch reads FRNIVQKLTG. Phosphoserine occurs at positions 43, 99, 115, 142, and 145. A compositionally biased stretch (basic and acidic residues) spans 115–133; that stretch reads SAREEHHAQPDKEEQKAIA. Residues 115–177 are disordered; that stretch reads SAREEHHAQP…RIHEDNHRDS (63 aa). A compositionally biased stretch (low complexity) spans 148-159; it reads EPAPELLPLFPL. A Phosphoserine modification is found at S161. The segment covering 168 to 177 has biased composition (basic and acidic residues); that stretch reads RIHEDNHRDS.

In terms of processing, phosphorylated on serine residues by MPK6.

It is found in the nucleus. In terms of biological role, may modulate WRKY transcription factor activities. The polypeptide is VQ motif-containing protein 11 (Arabidopsis thaliana (Mouse-ear cress)).